The chain runs to 172 residues: Large ribosomal subunit protein bL17 (172 aa).

Residues 123–172 (ATGSKRAQTEEAASQEPAAEAGKQPAEGATSVQTAEAADASQAEGEAEEK) form a disordered region. Over residues 132–143 (EEAASQEPAAEA) the composition is skewed to low complexity.

It belongs to the bacterial ribosomal protein bL17 family. Part of the 50S ribosomal subunit. Contacts protein L32.

The polypeptide is Large ribosomal subunit protein bL17 (Thermobifida fusca (strain YX)).